Reading from the N-terminus, the 200-residue chain is Recombination protein RecR (200 aa).

Residues 57–72 form a C4-type zinc finger; that stretch reads CSQCRDFTEEDTCNIC. The 96-residue stretch at 81–176 folds into the Toprim domain; the sequence is GLLCVVEMPA…KVSRIAHGIP (96 aa).

It belongs to the RecR family.

May play a role in DNA repair. It seems to be involved in an RecBC-independent recombinational process of DNA repair. It may act with RecF and RecO. This is Recombination protein RecR from Haemophilus influenzae (strain 86-028NP).